Here is a 167-residue protein sequence, read N- to C-terminus: Ribosome maturation factor RimM (167 aa).

The 73-residue stretch at 94–166 (QNRAWLHELE…YIVVPRFDEF (73 aa)) folds into the PRC barrel domain.

This sequence belongs to the RimM family. Binds ribosomal protein uS19.

It is found in the cytoplasm. Its function is as follows. An accessory protein needed during the final step in the assembly of 30S ribosomal subunit, possibly for assembly of the head region. Essential for efficient processing of 16S rRNA. May be needed both before and after RbfA during the maturation of 16S rRNA. It has affinity for free ribosomal 30S subunits but not for 70S ribosomes. In Chlorobium phaeovibrioides (strain DSM 265 / 1930) (Prosthecochloris vibrioformis (strain DSM 265)), this protein is Ribosome maturation factor RimM.